The chain runs to 438 residues: Hydrogenobyrinate a,c-diamide synthase (438 aa).

Residues 247–438 form the GATase cobBQ-type domain; the sequence is RIALAEDAAF…TFFHAIAKGG (192 aa). Cys-329 (nucleophile) is an active-site residue.

It belongs to the CobB/CbiA family. It depends on Mg(2+) as a cofactor.

The enzyme catalyses hydrogenobyrinate + 2 L-glutamine + 2 ATP + 2 H2O = hydrogenobyrinate a,c-diamide + 2 L-glutamate + 2 ADP + 2 phosphate + 2 H(+). It participates in cofactor biosynthesis; adenosylcobalamin biosynthesis; cob(II)yrinate a,c-diamide from precorrin-2 (aerobic route): step 9/10. Catalyzes the ATP-dependent amidation of the two carboxylate groups at positions a and c of hydrogenobyrinate, using either L-glutamine or ammonia as the nitrogen source. The chain is Hydrogenobyrinate a,c-diamide synthase from Agrobacterium fabrum (strain C58 / ATCC 33970) (Agrobacterium tumefaciens (strain C58)).